The chain runs to 887 residues: Beta-galactosidase 9 (887 aa).

The N-terminal stretch at 1-30 (MAESIRTFSLQWRILSLIIALLVYFPILSG) is a signal peptide. Asn-37 carries N-linked (GlcNAc...) asparagine glycosylation. Glu-194 acts as the Proton donor in catalysis. The active-site Nucleophile is Glu-263. 5 N-linked (GlcNAc...) asparagine glycosylation sites follow: Asn-463, Asn-485, Asn-496, Asn-527, and Asn-785. Residues 791–877 (NSVAPEVHLH…KTLAVMSRCS (87 aa)) enclose the SUEL-type lectin domain. An N-linked (GlcNAc...) asparagine glycan is attached at Asn-881.

The protein belongs to the glycosyl hydrolase 35 family. Ubiquitous, with higher expression levels in siliques.

The protein localises to the secreted. It localises to the extracellular space. It is found in the apoplast. It catalyses the reaction Hydrolysis of terminal non-reducing beta-D-galactose residues in beta-D-galactosides.. This Arabidopsis thaliana (Mouse-ear cress) protein is Beta-galactosidase 9 (BGAL9).